Reading from the N-terminus, the 96-residue chain is Co-chaperonin GroES (96 aa).

It belongs to the GroES chaperonin family. As to quaternary structure, heptamer of 7 subunits arranged in a ring. Interacts with the chaperonin GroEL.

The protein localises to the cytoplasm. In terms of biological role, together with the chaperonin GroEL, plays an essential role in assisting protein folding. The GroEL-GroES system forms a nano-cage that allows encapsulation of the non-native substrate proteins and provides a physical environment optimized to promote and accelerate protein folding. GroES binds to the apical surface of the GroEL ring, thereby capping the opening of the GroEL channel. The protein is Co-chaperonin GroES of Geobacter sp. (strain M21).